We begin with the raw amino-acid sequence, 442 residues long: Mimosinase, chloroplastic (442 aa).

The transit peptide at 1–35 directs the protein to the chloroplast; the sequence is MALPSAFLNPFVPSPVTANPRTKFARVGKGFNVSC. 6 residues coordinate pyridoxal 5'-phosphate: tyrosine 103, arginine 105, glycine 133, methionine 134, serine 252, and threonine 254. N6-(pyridoxal phosphate)lysine is present on lysine 255.

It belongs to the trans-sulfuration enzymes family. Forms homodimers. May form homotetramers from two homodimers. Requires pyridoxal 5'-phosphate as cofactor.

It is found in the plastid. The protein localises to the chloroplast. The catalysed reaction is L-mimosine + H2O = 3-hydroxy-4H-pyrid-4-one + pyruvate + NH4(+). It carries out the reaction L,L-cystathionine + H2O = L-homocysteine + pyruvate + NH4(+). It catalyses the reaction an S-substituted L-cysteine + H2O = a thiol + pyruvate + NH4(+). Its function is as follows. Catalyzes the degradation of mimosine, which is a toxic secondary metabolite found in all Mimosa and Leucaena species. Catalyzes the degradation of cystathionine, but seems to have lower preference toward cystathionine over mimosine. In Mimosa pudica (Sensitive plant), this protein is Mimosinase, chloroplastic.